The following is a 193-amino-acid chain: Ion-translocating oxidoreductase complex subunit A (193 aa).

6 helical membrane-spanning segments follow: residues 5–25, 39–59, 62–82, 102–122, 134–154, and 172–192; these read ALLL…FLGL, LGMG…SWML, WLLA…LVIA, SLGI…VALL, VLFG…FAGL, and AAFI…GLVA.

It belongs to the NqrDE/RnfAE family. As to quaternary structure, the complex is composed of six subunits: RnfA, RnfB, RnfC, RnfD, RnfE and RnfG.

Its subcellular location is the cell inner membrane. Functionally, part of a membrane-bound complex that couples electron transfer with translocation of ions across the membrane. This chain is Ion-translocating oxidoreductase complex subunit A, found in Aromatoleum aromaticum (strain DSM 19018 / LMG 30748 / EbN1) (Azoarcus sp. (strain EbN1)).